Reading from the N-terminus, the 85-residue chain is Contulakin-Lt2 (85 aa).

Residues 1-22 (MQMAYWVMVMMMVGITAPLSEG) form the signal peptide. A propeptide spanning residues 23–61 (RKLNDAIRGLVPNDLTPQLLQSLVSRRHRVFHLDNTYLK) is cleaved from the precursor. Residues C65 and C70 are joined by a disulfide bond. Residues 76–85 (RRRDLKKRNK) constitute a propeptide that is removed on maturation.

The protein belongs to the conotoxin C superfamily. As to expression, expressed by the venom duct.

The protein localises to the secreted. Its function is as follows. Acts as an agonist of neurotensin receptors. It binds to human neurotensin type 1 receptor (NTSR1), rat neurotensin types 1 and 2 receptors (NTSR1/NTSR2) and mouse neurotensin type 3 receptor (SORT1). This chain is Contulakin-Lt2, found in Conus litteratus (Lettered cone).